A 157-amino-acid polypeptide reads, in one-letter code: Tripartite terminase subunit 2 (157 aa).

The tract at residues 1–69 (MSWAKQRVPF…DGEDGHALPD (69 aa)) is disordered. Residues 11–27 (LDDDDGEEENDVQDDVD) show a composition bias toward acidic residues.

Belongs to the herpesviridae TRM2 protein family. In terms of assembly, associates with TRM1 and TRM3 to form the tripartite terminase complex.

The protein localises to the host nucleus. Functionally, component of the molecular motor that translocates viral genomic DNA in empty capsid during DNA packaging. Forms a tripartite terminase complex together with TRM1 and TRM3 in the host cytoplasm. Once the complex reaches the host nucleus, it interacts with the capsid portal vertex. This portal forms a ring in which genomic DNA is translocated into the capsid. The polypeptide is Tripartite terminase subunit 2 (Homo sapiens (Human)).